The primary structure comprises 473 residues: GTPase Der (473 aa).

EngA-type G domains are found at residues phenylalanine 3–arginine 167 and leucine 203–asparagine 378. GTP is bound by residues glycine 9–serine 16, aspartate 56–leucine 60, asparagine 119–glutamate 122, glycine 209–serine 216, aspartate 256–methionine 260, and asparagine 321–aspartate 324. Positions lysine 379 to aspartate 463 constitute a KH-like domain.

Belongs to the TRAFAC class TrmE-Era-EngA-EngB-Septin-like GTPase superfamily. EngA (Der) GTPase family. As to quaternary structure, associates with the 50S ribosomal subunit.

Functionally, GTPase that plays an essential role in the late steps of ribosome biogenesis. This is GTPase Der from Rhizobium johnstonii (strain DSM 114642 / LMG 32736 / 3841) (Rhizobium leguminosarum bv. viciae).